Here is a 514-residue protein sequence, read N- to C-terminus: Putative GTP-binding protein 6 (514 aa).

Residues 48 to 71 (WAGGGPVRGGGEEDPREDEEEEED) are disordered. The span at 59 to 71 (EEDPREDEEEEED) shows a compositional bias: acidic residues. Residues 285 to 449 (PVVSVVGYTN…ALEASVLRAT (165 aa)) enclose the Hflx-type G domain. Mg(2+) is bound by residues Thr298 and Thr319.

The protein belongs to the TRAFAC class OBG-HflX-like GTPase superfamily. HflX GTPase family. Mg(2+) is required as a cofactor.

The chain is Putative GTP-binding protein 6 (Gtpbp6) from Mus musculus (Mouse).